Reading from the N-terminus, the 300-residue chain is Transacylase cctO (300 aa).

A helical membrane pass occupies residues 52-72; the sequence is IVYVSLTFFVVSIGLNFILAI. 2 consecutive short sequence motifs (HXXHC) follow at residues 185–189 and 225–229; these read HQLGC and HVDQC. The N-linked (GlcNAc...) asparagine glycan is linked to asparagine 270.

Belongs to the ustYa family.

Its subcellular location is the membrane. It functions in the pathway mycotoxin biosynthesis. Its function is as follows. Transacylase; part of the gene cluster that mediates the biosynthesis of the mycotoxin cyclochlorotine, a hepatotoxic and carcinogenic cyclic chlorinated pentapeptide. Within the pathway, cctO catalyzes the intramolecular O,N-transacylation from isocyclochlorotine to cyclochlorotine. The NRPS cctN initially catalyzes the condensation of L-serine (Ser), Pro, L-2-aminobutyrate (2Abu), Ser, and beta-Phe in this order to produce isocyclotine. After the dichlorination of Pro2 catalyzed by cctP2 to produce isocyclochlorotine, the cctO-mediated transacylation of isocyclochlorotine can furnish cyclochlorotine. The subsequent hydroxylation of cyclochlorotine by cctR yields hydroxycyclochlorotine as the final product. CctP1 probably acts as a phenylalanine aminomutase and provides the uncommon building block beta-Phe. Furthermore, 2Abu can be synthesized from threonine by one of the threonine dehydratases and transaminases localized outside of the cluster. The functions of the remaining proteins encoded by the cluster, cctM and cctT, have not been identified yet. In Talaromyces islandicus (Penicillium islandicum), this protein is Transacylase cctO.